Consider the following 367-residue polypeptide: 2-aminoethylphosphonate--pyruvate transaminase (367 aa).

At Lys194 the chain carries N6-(pyridoxal phosphate)lysine.

This sequence belongs to the class-V pyridoxal-phosphate-dependent aminotransferase family. PhnW subfamily. In terms of assembly, homodimer. It depends on pyridoxal 5'-phosphate as a cofactor.

It carries out the reaction (2-aminoethyl)phosphonate + pyruvate = phosphonoacetaldehyde + L-alanine. Its function is as follows. Involved in phosphonate degradation. In Salmonella paratyphi A (strain ATCC 9150 / SARB42), this protein is 2-aminoethylphosphonate--pyruvate transaminase.